The following is a 180-amino-acid chain: uncharacterized protein (180 aa).

Residues 138–180 (SVMPVPMPQQNSDNGSTPHIVDSSKSKDKSSNDGDNGVFTGDE) are disordered. Residues 145–154 (PQQNSDNGST) are compositionally biased toward polar residues. The segment covering 159–169 (DSSKSKDKSSN) has biased composition (basic and acidic residues).

This is an uncharacterized protein from Acidianus filamentous virus 2 (isolate Italy/Pozzuoli) (AFV-2).